A 225-amino-acid polypeptide reads, in one-letter code: Protein YIP4 (225 aa).

Phosphoserine occurs at positions 27 and 28. 5 helical membrane-spanning segments follow: residues 91–111 (WDLW…ALST), 118–138 (SVFT…SLNI), 154–176 (LGYS…LIFI), 180–199 (VIVA…LQNS), and 205–225 (KLLA…IIFL).

This sequence belongs to the YIP1 family. Interacts with the YIP1 family members yip1 and yip5, and with several Rab GTPases.

The protein localises to the membrane. Its function is as follows. May be involved in proper membrane localization of Rab GTPases. This Schizosaccharomyces pombe (strain 972 / ATCC 24843) (Fission yeast) protein is Protein YIP4.